A 595-amino-acid polypeptide reads, in one-letter code: Glycine betaine transporter BetP (595 aa).

The Cytoplasmic portion of the chain corresponds to 1–59 (MTTSDPNPKPIVEDAQPEQITATEELAGLLENPTNLEGKLADAEEEIILEGEDTQASLN). The helical transmembrane segment at 60–80 (WSVIVPALVIVLATVVWGIGF) threads the bilayer. At 81–98 (KDSFTNFASSALSAVVDN) the chain is on the periplasmic side. The helical transmembrane segment at 99-119 (LGWAFILFGTVFVFFIVVIAA) threads the bilayer. The Cytoplasmic segment spans residues 120-137 (SKFGTIRLGRIDEAPEFR). The helical transmembrane segment at 138–158 (TVSWISMMFAAGMGIGLMFYG) threads the bilayer. The Na(+) site is built by Ala147, Ala148, and Met150. Position 152 to 153 (152 to 153 (IG)) interacts with glycine betaine. The Periplasmic segment spans residues 159–185 (TTEPLTFYRNGVPGHDEHNVGVAMSTT). The chain crosses the membrane as a helical span at residues 186–206 (MFHWTLHPWAIYAIVGLAIAY). Residues 207-236 (STFRVGRKQLLSSAFVPLIGEKGAEGWLGK) are Cytoplasmic-facing. A helical membrane pass occupies residues 237–257 (LIDILAIIATVFGTACSLGLG). Residue Ser253 participates in glycine betaine binding. The Periplasmic segment spans residues 258-276 (ALQIGAGLSAANIIEDPSD). A helical membrane pass occupies residues 277 to 296 (WTIVGIVSVLTLAFIFSAIS). At 297-299 (GVG) the chain is on the cytoplasmic side. Residues 300–323 (KGIQYLSNANMVLAALLAIFVFVV) form a helical membrane-spanning segment. Na(+) is bound by residues Ser306 and Met310. Over 324–365 (GPTVSILNLLPGSIGNYLSNFFQMAGRTAMSADGTAGEWLGS) the chain is Periplasmic. Residues 366-386 (WTIFYWAWWISWSPFVGMFLA) form a helical membrane-spanning segment. Position 373-377 (373-377 (WWISW)) interacts with glycine betaine. Over 387-396 (RISRGRSIRE) the chain is Cytoplasmic. The chain crosses the membrane as a helical span at residues 397–417 (FILGVLLVPAGVSTVWFSIFG). Topologically, residues 418–451 (GTAIVFEQNGESIWGDGAAEEQLFGLLHALPGGQ) are periplasmic. Residues 452 to 476 (IMGIIAMILLGTFFITSADSASTVM) form a helical membrane-spanning segment. The Cytoplasmic portion of the chain corresponds to 477–489 (GTMSQHGQLEANK). The chain crosses the membrane as a helical span at residues 490–510 (WVTAAWGVATAAIGLTLLLSG). The Periplasmic portion of the chain corresponds to 511-520 (GDNALSNLQN). Residues 521–541 (VTIVAATPFLFVVIGLMFALV) traverse the membrane as a helical segment. The Cytoplasmic segment spans residues 542-595 (KDLSNDVIYLEYREQQRFNARLARERRVHNEHRKRELAAKRRRERKASGAGKRR). Residues 570 to 595 (HNEHRKRELAAKRRRERKASGAGKRR) are disordered. Positions 581 to 595 (KRRRERKASGAGKRR) are enriched in basic residues.

This sequence belongs to the BCCT transporter (TC 2.A.15) family. In terms of assembly, homotrimer. The monomer can accumulate glycine betaine, but trimerization is required to properly respond to osmotic stress.

Its subcellular location is the cell inner membrane. With respect to regulation, uptake is activated by hyperosmotic stress. Osmoresponsive activation is triggered by a change in the internal K(+) concentration. In addition, shows a pronounced chill stimulation, at temperatures around 10 degrees Celsius. Chill activation may be influenced by the membrane lipid composition. Uptake is completely abolished by the uncoupler CCCP, and to a different extent by the ionophores valinomycin and nigericin. Functionally, involved in response to osmotic stress. High-affinity glycine betaine-specific uptake system, which couples the uptake of glycine betaine to the symport of two Na(+) ions. Transport is driven both by the Na(+) gradient and by the electrical potential. In addition, functions both as an osmosensor and as an osmoregulator that transduces signal to the catalytic part of the carrier protein, which adapts its activity to the extent of osmotic stress. In Corynebacterium glutamicum (strain ATCC 13032 / DSM 20300 / JCM 1318 / BCRC 11384 / CCUG 27702 / LMG 3730 / NBRC 12168 / NCIMB 10025 / NRRL B-2784 / 534), this protein is Glycine betaine transporter BetP.